The sequence spans 180 residues: Pro-glucagon (180 aa).

An N-terminal signal peptide occupies residues 1–20 (MKSIYFVAGLFVMLVQGSWQ). The segment at 26 to 56 (TEEKSRSFSAPQTEPLNDLDQMNEDKRHSQG) is disordered. Ser-54 is subject to Phosphoserine. Residues 84-89 (NKNNIA) constitute a propeptide that is removed on maturation. 2 positions are modified to phosphoserine: Ser-105 and Ser-108. Arginine amide is present on Arg-127. The propeptide occupies 131–145 (DFPEEVAIVEEFRRR). 2 positions are modified to phosphoserine: Ser-150 and Ser-152.

It belongs to the glucagon family. Proglucagon is post-translationally processed in a tissue-specific manner in pancreatic A cells and intestinal L cells. In pancreatic A cells, the major bioactive hormone is glucagon cleaved by PCSK2/PC2. In the intestinal L cells PCSK1/PC1 liberates GLP-1, GLP-2, glicentin and oxyntomodulin. GLP-1 is further N-terminally truncated by post-translational processing in the intestinal L cells resulting in GLP-1(7-37) GLP-1-(7-36)amide. The C-terminal amidation is neither important for the metabolism of GLP-1 nor for its effects on the endocrine pancreas. In terms of tissue distribution, glucagon is secreted in the A cells of the islets of Langerhans. GLP-1, GLP-2, oxyntomodulin and glicentin are secreted from enteroendocrine cells throughout the gastrointestinal tract. GLP-1 and GLP-2 are also secreted in selected neurons in the brain.

The protein resides in the secreted. Plays a key role in glucose metabolism and homeostasis. Regulates blood glucose by increasing gluconeogenesis and decreasing glycolysis. A counterregulatory hormone of insulin, raises plasma glucose levels in response to insulin-induced hypoglycemia. Plays an important role in initiating and maintaining hyperglycemic conditions in diabetes. Functionally, potent stimulator of glucose-dependent insulin release. Also stimulates insulin release in response to IL6. Plays important roles on gastric motility and the suppression of plasma glucagon levels. May be involved in the suppression of satiety and stimulation of glucose disposal in peripheral tissues, independent of the actions of insulin. Has growth-promoting activities on intestinal epithelium. May also regulate the hypothalamic pituitary axis (HPA) via effects on LH, TSH, CRH, oxytocin, and vasopressin secretion. Increases islet mass through stimulation of islet neogenesis and pancreatic beta cell proliferation. Inhibits beta cell apoptosis. Its function is as follows. Stimulates intestinal growth and up-regulates villus height in the small intestine, concomitant with increased crypt cell proliferation and decreased enterocyte apoptosis. The gastrointestinal tract, from the stomach to the colon is the principal target for GLP-2 action. Plays a key role in nutrient homeostasis, enhancing nutrient assimilation through enhanced gastrointestinal function, as well as increasing nutrient disposal. Stimulates intestinal glucose transport and decreases mucosal permeability. In terms of biological role, significantly reduces food intake. Inhibits gastric emptying in humans. Suppression of gastric emptying may lead to increased gastric distension, which may contribute to satiety by causing a sensation of fullness. May modulate gastric acid secretion and the gastro-pyloro-duodenal activity. May play an important role in intestinal mucosal growth in the early period of life. The chain is Pro-glucagon (GCG) from Canis lupus familiaris (Dog).